A 347-amino-acid polypeptide reads, in one-letter code: GTPase Obg (347 aa).

In terms of domain architecture, Obg spans 1–158 (MFIDNVKLVL…LSVRLELKLI (158 aa)). One can recognise an OBG-type G domain in the interval 159 to 339 (ADVGLVGFPN…LKFMLLEEVK (181 aa)). Residues 165-172 (GFPNVGKS), 190-194 (FTTLT), 212-215 (DIPG), 280-283 (SKSD), and 320-322 (SSL) each bind GTP. Residues S172 and T192 each coordinate Mg(2+).

Belongs to the TRAFAC class OBG-HflX-like GTPase superfamily. OBG GTPase family. In terms of assembly, monomer. Mg(2+) is required as a cofactor.

The protein localises to the cytoplasm. In terms of biological role, an essential GTPase which binds GTP, GDP and possibly (p)ppGpp with moderate affinity, with high nucleotide exchange rates and a fairly low GTP hydrolysis rate. Plays a role in control of the cell cycle, stress response, ribosome biogenesis and in those bacteria that undergo differentiation, in morphogenesis control. The sequence is that of GTPase Obg from Campylobacter lari (strain RM2100 / D67 / ATCC BAA-1060).